Here is a 178-residue protein sequence, read N- to C-terminus: Caveolin-1 (178 aa).

Position 2 is an N-acetylserine (S2). A Phosphoserine modification is found at S2. The segment at 2–94 (SGGKYVDSEG…WKASFTTFTV (93 aa)) is required for homooligomerization. Over 2–104 (SGGKYVDSEG…TKYWFYRLLS (103 aa)) the chain is Cytoplasmic. N6-acetyllysine; alternate is present on K5. A Glycyl lysine isopeptide (Lys-Gly) (interchain with G-Cter in ubiquitin); alternate cross-link involves residue K5. Y6 is subject to Phosphotyrosine. S9 bears the Phosphoserine mark. Phosphotyrosine; by ABL1 and INSR is present on Y14. Y25 bears the Phosphotyrosine mark. Glycyl lysine isopeptide (Lys-Gly) (interchain with G-Cter in ubiquitin) cross-links involve residues K26, K30, K39, K47, and K57. The interaction with CAVIN3 stretch occupies residues 82–94 (DGIWKASFTTFTV). Residues 105–125 (TIFGIPMALIWGIYFAILSFL) constitute an intramembrane region (helical). At 126–178 (HIWAVVPCIKSFLIEIQCISRVYSIYVHTFCDPLFEAIGKIFSNIRISTQKEI) the chain is on the cytoplasmic side. The segment at 131-142 (VPCIKSFLIEIQ) is interacts with SPRY1, SPRY2, SPRY3 and SPRY4. 3 S-palmitoyl cysteine lipidation sites follow: C133, C143, and C156. Positions 149–160 (SIYVHTFCDPLF) are interacts with SPRY1, SPRY2, and SPRY4. Positions 167–178 (FSNIRISTQKEI) are interacts with SPRY1, SPRY2, SPRY3 and SPRY4.

The protein belongs to the caveolin family. Homooligomer. Interacts (via the N-terminus) with DPP4; the interaction is direct. Forms a stable heterooligomeric complex with CAV2 that targets to lipid rafts and drives caveolae formation. Interacts with BMX, BTK, CTNNB1, CDH1, GLIPR2, JUP, NOSTRIN, SNAP25 and STX1A. Interacts with SLC7A9. Interacts with TGFBR1. Interacts with CTNNB1, CDH1 and JUP. Interacts with PACSIN2; this interaction induces membrane tubulation. Interacts with CAVIN3 (via leucine-zipper domain) in a cholesterol-sensitive manner. Interacts with EHD2 in a cholesterol-dependent manner. Interacts with CAVIN1. Forms a ternary complex with UBXN6 and VCP; mediates CAV1 targeting to lysosomes for degradation. Interacts with ABCG1; this interaction regulates ABCG1-mediated cholesterol efflux. Interacts with NEU3; this interaction enhances NEU3 sialidase activity within caveola. Interacts (via C-terminus) with SPRY1, SPRY2 (via C-terminus), SPRY3, and SPRY4. Interacts with IGFBP5; this interaction allows trafficking of IGFBP5 from the plasma membrane to the nucleus. The N-terminus of both isoforms are blocked. In terms of processing, phosphorylated at Tyr-14 by ABL1 in response to oxidative stress. Post-translationally, ubiquitinated. Undergo monoubiquitination and multi- and/or polyubiquitination. Monoubiquitination of N-terminal lysines promotes integration in a ternary complex with UBXN6 and VCP which promotes oligomeric CAV1 targeting to lysosomes for degradation. Ubiquitinated by ZNRF1; leading to degradation and modulation of the TLR4-mediated immune response. In terms of tissue distribution, adipose tissue, lung, heart, skeletal muscle, stomach, small bowel, kidney, spleen and testis (at protein level).

The protein resides in the golgi apparatus membrane. The protein localises to the cell membrane. Its subcellular location is the membrane. It is found in the caveola. It localises to the membrane raft. The protein resides in the golgi apparatus. The protein localises to the trans-Golgi network. Its function is as follows. May act as a scaffolding protein within caveolar membranes. Forms a stable heterooligomeric complex with CAV2 that targets to lipid rafts and drives caveolae formation. Mediates the recruitment of CAVIN proteins (CAVIN1/2/3/4) to the caveolae. Interacts directly with G-protein alpha subunits and can functionally regulate their activity. Involved in the costimulatory signal essential for T-cell receptor (TCR)-mediated T-cell activation. Its binding to DPP4 induces T-cell proliferation and NF-kappa-B activation in a T-cell receptor/CD3-dependent manner. Recruits CTNNB1 to caveolar membranes and may regulate CTNNB1-mediated signaling through the Wnt pathway. Negatively regulates TGFB1-mediated activation of SMAD2/3 by mediating the internalization of TGFBR1 from membrane rafts leading to its subsequent degradation. Binds 20(S)-hydroxycholesterol (20(S)-OHC). The sequence is that of Caveolin-1 (Cav1) from Mus musculus (Mouse).